Consider the following 115-residue polypeptide: Large ribosomal subunit protein bL19 (115 aa).

It belongs to the bacterial ribosomal protein bL19 family.

Functionally, this protein is located at the 30S-50S ribosomal subunit interface and may play a role in the structure and function of the aminoacyl-tRNA binding site. The sequence is that of Large ribosomal subunit protein bL19 from Sodalis glossinidius (strain morsitans).